A 254-amino-acid chain; its full sequence is Mannose-binding protein (254 aa).

The N-terminal stretch at methionine 1–alanine 19 is a signal peptide. A disordered region spans residues asparagine 46–arginine 99. Basic and acidic residues predominate over residues arginine 51 to glutamate 66. Position 57 is a 4-hydroxyproline (proline 57). Lysine 58 and lysine 61 each carry 5-hydroxylysine. O-linked (Gal...) hydroxylysine glycosylation is found at lysine 58 and lysine 61. Proline 75 carries the post-translational modification 4-hydroxyproline. 5-hydroxylysine is present on residues lysine 93 and lysine 96. The 111-residue stretch at valine 140 to isoleucine 250 folds into the C-type lectin domain. 2 disulfides stabilise this stretch: cysteine 161-cysteine 252 and cysteine 229-cysteine 243.

As to quaternary structure, oligomeric complex of 3 or more homotrimers.

It is found in the secreted. Calcium-dependent lectin involved in innate immune defense. Binds mannose, fucose and N-acetylglucosamine on different microorganisms and activates the lectin complement pathway. The protein is Mannose-binding protein of Gallus gallus (Chicken).